A 630-amino-acid polypeptide reads, in one-letter code: ATP-dependent zinc metalloprotease FtsH (630 aa).

The Cytoplasmic portion of the chain corresponds to 1 to 7; sequence MNNFMKN. A helical transmembrane segment spans residues 8 to 28; that stretch reads IGFYLVLIALSILVAQFFVDT. At 29-111 the chain is on the periplasmic side; the sequence is DVNTIVDTDV…KTEPEPTAPW (83 aa). The chain crosses the membrane as a helical span at residues 112-132; that stretch reads WTGMLAYILPIILLIGAWFFI. Over 133–630 the chain is Cytoplasmic; sequence MQRMQGGGSQ…ENREHENNDK (498 aa). 203 to 210 lines the ATP pocket; the sequence is GPPGTGKT. Zn(2+) is bound at residue His425. The active site involves Glu426. Residues His429 and Asp501 each coordinate Zn(2+). Residues 601 to 630 form a disordered region; the sequence is KLIKGEPLDDDSIDNSTDENENREHENNDK. Positions 608–619 are enriched in acidic residues; the sequence is LDDDSIDNSTDE. Basic and acidic residues predominate over residues 620–630; the sequence is NENREHENNDK.

The protein in the central section; belongs to the AAA ATPase family. It in the C-terminal section; belongs to the peptidase M41 family. As to quaternary structure, homohexamer. It depends on Zn(2+) as a cofactor.

The protein localises to the cell inner membrane. Functionally, acts as a processive, ATP-dependent zinc metallopeptidase for both cytoplasmic and membrane proteins. Plays a role in the quality control of integral membrane proteins. This Halothermothrix orenii (strain H 168 / OCM 544 / DSM 9562) protein is ATP-dependent zinc metalloprotease FtsH.